The chain runs to 705 residues: Polyribonucleotide nucleotidyltransferase (705 aa).

Residues Asp486 and Asp492 each coordinate Mg(2+). One can recognise a KH domain in the interval 553–612 (PRIYTMKINPEKIKDVIGKGGSVIRALTDETGTTIEIEDDGTIKIAATDGDKAKHAIRRI). The S1 motif domain maps to 622 to 690 (GRIYAGKVTR…RQGRIRLSIK (69 aa)).

It belongs to the polyribonucleotide nucleotidyltransferase family. In terms of assembly, component of the RNA degradosome, which is a multiprotein complex involved in RNA processing and mRNA degradation. It depends on Mg(2+) as a cofactor.

The protein localises to the cytoplasm. The catalysed reaction is RNA(n+1) + phosphate = RNA(n) + a ribonucleoside 5'-diphosphate. Involved in mRNA degradation. Catalyzes the phosphorolysis of single-stranded polyribonucleotides processively in the 3'- to 5'-direction. This is Polyribonucleotide nucleotidyltransferase from Yersinia pseudotuberculosis serotype O:3 (strain YPIII).